The sequence spans 542 residues: Probable serine/threonine-protein kinase ndrB (542 aa).

A disordered region spans residues 1–52 (MNVERKLESLSLQQQQQEEQQDESEQPNQGVEDEEEEEYDEEEYEEEEEDIN). Over residues 9–18 (SLSLQQQQQE) the composition is skewed to low complexity. The segment covering 19-51 (EQQDESEQPNQGVEDEEEEEYDEEEYEEEEEDI) has biased composition (acidic residues). Positions 130-437 (FESIRIIGRG…VEEIQSHPFF (308 aa)) constitute a Protein kinase domain. ATP contacts are provided by residues 136–144 (IGRGAFGEV) and K159. D258 acts as the Proton acceptor in catalysis. The AGC-kinase C-terminal domain maps to 438–510 (KGVDWRRLRE…RNFDAMRDAF (73 aa)). The interval 452 to 486 (IIPQLSSPTDTSNFDHYEEEQQPEPMQPVQSKSRR) is disordered. A compositionally biased stretch (polar residues) spans 455-465 (QLSSPTDTSNF).

This sequence belongs to the protein kinase superfamily. AGC Ser/Thr protein kinase family.

It localises to the cytoplasm. It catalyses the reaction L-seryl-[protein] + ATP = O-phospho-L-seryl-[protein] + ADP + H(+). The enzyme catalyses L-threonyl-[protein] + ATP = O-phospho-L-threonyl-[protein] + ADP + H(+). The sequence is that of Probable serine/threonine-protein kinase ndrB (ndrB) from Dictyostelium discoideum (Social amoeba).